The primary structure comprises 111 residues: Anti-adapter protein IraM (111 aa).

Belongs to the IraM/RssC family.

It is found in the cytoplasm. Its function is as follows. Inhibits RpoS proteolysis by regulating RssB activity, thereby increasing the stability of the sigma stress factor RpoS during magnesium starvation. The protein is Anti-adapter protein IraM of Escherichia coli O127:H6 (strain E2348/69 / EPEC).